Here is a 197-residue protein sequence, read N- to C-terminus: Holliday junction branch migration complex subunit RuvA (197 aa).

Positions 1 to 63 are domain I; the sequence is MIEFIRGYVD…EDVLALYGFH (63 aa). The tract at residues 64–142 is domain II; sequence TRQERMLFAK…AIVPDAFPNL (79 aa). The segment at 143-149 is flexible linker; the sequence is FTEPLEE. A domain III region spans residues 149-197; the sequence is ETNALSEAIEALKALGYADKEIQKVVPMLRQERLSTEGYIKLALQKLLK.

This sequence belongs to the RuvA family. Homotetramer. Forms an RuvA(8)-RuvB(12)-Holliday junction (HJ) complex. HJ DNA is sandwiched between 2 RuvA tetramers; dsDNA enters through RuvA and exits via RuvB. An RuvB hexamer assembles on each DNA strand where it exits the tetramer. Each RuvB hexamer is contacted by two RuvA subunits (via domain III) on 2 adjacent RuvB subunits; this complex drives branch migration. In the full resolvosome a probable DNA-RuvA(4)-RuvB(12)-RuvC(2) complex forms which resolves the HJ.

The protein resides in the cytoplasm. The RuvA-RuvB-RuvC complex processes Holliday junction (HJ) DNA during genetic recombination and DNA repair, while the RuvA-RuvB complex plays an important role in the rescue of blocked DNA replication forks via replication fork reversal (RFR). RuvA specifically binds to HJ cruciform DNA, conferring on it an open structure. The RuvB hexamer acts as an ATP-dependent pump, pulling dsDNA into and through the RuvAB complex. HJ branch migration allows RuvC to scan DNA until it finds its consensus sequence, where it cleaves and resolves the cruciform DNA. The protein is Holliday junction branch migration complex subunit RuvA of Anoxybacillus flavithermus (strain DSM 21510 / WK1).